The chain runs to 183 residues: Dual-action ribosomal maturation protein DarP (183 aa).

The protein belongs to the DarP family.

It is found in the cytoplasm. In terms of biological role, member of a network of 50S ribosomal subunit biogenesis factors which assembles along the 30S-50S interface, preventing incorrect 23S rRNA structures from forming. Promotes peptidyl transferase center (PTC) maturation. The sequence is that of Dual-action ribosomal maturation protein DarP from Salmonella gallinarum (strain 287/91 / NCTC 13346).